A 77-amino-acid polypeptide reads, in one-letter code: uncharacterized protein (77 aa).

2 helical membrane passes run 22 to 42 and 44 to 64; these read VFAN…LPVG and LIGL…FFLG.

Its subcellular location is the cell membrane. This is an uncharacterized protein from Methanocaldococcus jannaschii (strain ATCC 43067 / DSM 2661 / JAL-1 / JCM 10045 / NBRC 100440) (Methanococcus jannaschii).